The primary structure comprises 364 residues: DNA replication and repair protein RecF (364 aa).

30 to 37 (GNNAQGKT) is an ATP binding site.

Belongs to the RecF family.

The protein localises to the cytoplasm. Its function is as follows. The RecF protein is involved in DNA metabolism; it is required for DNA replication and normal SOS inducibility. RecF binds preferentially to single-stranded, linear DNA. It also seems to bind ATP. The polypeptide is DNA replication and repair protein RecF (Streptococcus uberis (strain ATCC BAA-854 / 0140J)).